The chain runs to 281 residues: Dexamethasone-induced Ras-related protein 1 (281 aa).

At cysteine 11 the chain carries S-nitrosocysteine. 31 to 38 (GSSKVGKT) serves as a coordination point for GTP. The Effector region signature appears at 53–61 (YTPTIEDFH). GTP contacts are provided by residues 78–82 (DTSGN) and 145–148 (NKGD). Cysteine methyl ester is present on cysteine 278. Cysteine 278 carries S-farnesyl cysteine lipidation. A propeptide spans 279-281 (VIS) (removed in mature form).

This sequence belongs to the small GTPase superfamily. RasD family. In terms of assembly, forms a ternary complex with CAPON and NOS1. Component of a complex, at least composed of APBB1, RASD1/DEXRAS1 and APP. Interacts with APBB1/FE65. In terms of processing, S-nitrosylation stimulates guanine-nucleotide exchange activity. As to expression, expressed in a variety of tissues including heart, cardiovascular tissues, brain, placenta, lung, liver, skeletal muscle, kidney, pancreas, gastrointestinal and reproductive tissues.

The protein resides in the cell membrane. It localises to the cytoplasm. The protein localises to the perinuclear region. It is found in the nucleus. In terms of biological role, small GTPase. Negatively regulates the transcription regulation activity of the APBB1/FE65-APP complex via its interaction with APBB1/FE65. This is Dexamethasone-induced Ras-related protein 1 (RASD1) from Homo sapiens (Human).